A 586-amino-acid chain; its full sequence is Chaperonin 60 subunit alpha 1, chloroplastic (586 aa).

The transit peptide at 1–46 (MASANALSSASVLCSSRQSKLGGGNQQQGQRVSYNKRTIRRFSVRA) directs the protein to the chloroplast. Position 90 is a phosphoserine (Ser-90).

Belongs to the chaperonin (HSP60) family. Part of the Cpn60 complex composed of 7 alpha and 7 beta subunits. This complex shows ATPase activity. The Cpn60 complex interacts with the Cpn10 complex. In terms of tissue distribution, expressed in leaves, stems, siliques and flowers.

It is found in the plastid. Its subcellular location is the chloroplast. Functionally, binds RuBisCO small and large subunits and is implicated in the assembly of the enzyme oligomer. Involved in protein assisted folding. Required for proper chloroplast development. This Arabidopsis thaliana (Mouse-ear cress) protein is Chaperonin 60 subunit alpha 1, chloroplastic (CPN60A1).